Here is a 172-residue protein sequence, read N- to C-terminus: 3-hydroxydecanoyl-[acyl-carrier-protein] dehydratase (172 aa).

Residue histidine 71 is part of the active site.

This sequence belongs to the thioester dehydratase family. FabA subfamily. In terms of assembly, homodimer.

It is found in the cytoplasm. The catalysed reaction is a (3R)-hydroxyacyl-[ACP] = a (2E)-enoyl-[ACP] + H2O. The enzyme catalyses (3R)-hydroxydecanoyl-[ACP] = (2E)-decenoyl-[ACP] + H2O. It carries out the reaction (2E)-decenoyl-[ACP] = (3Z)-decenoyl-[ACP]. The protein operates within lipid metabolism; fatty acid biosynthesis. Its function is as follows. Necessary for the introduction of cis unsaturation into fatty acids. Catalyzes the dehydration of (3R)-3-hydroxydecanoyl-ACP to E-(2)-decenoyl-ACP and then its isomerization to Z-(3)-decenoyl-ACP. Can catalyze the dehydratase reaction for beta-hydroxyacyl-ACPs with saturated chain lengths up to 16:0, being most active on intermediate chain length. This Aliivibrio salmonicida (strain LFI1238) (Vibrio salmonicida (strain LFI1238)) protein is 3-hydroxydecanoyl-[acyl-carrier-protein] dehydratase.